The chain runs to 126 residues: Histone H2B 1/2/3/4/6 (126 aa).

Residues 1-12 (MPEPAKSAPAPK) show a composition bias toward low complexity. Residues 1-36 (MPEPAKSAPAPKKGSKKAVTKTQKKGDKKRKKSRKE) form a disordered region. N6-acetyllysine is present on residues K6 and K13. Over residues 13 to 34 (KGSKKAVTKTQKKGDKKRKKSR) the composition is skewed to basic residues. The residue at position 15 (S15) is a Phosphoserine. N6-acetyllysine is present on residues K16 and K21. K121 participates in a covalent cross-link: Glycyl lysine isopeptide (Lys-Gly) (interchain with G-Cter in ubiquitin).

Belongs to the histone H2B family. In terms of assembly, the nucleosome is a histone octamer containing two molecules each of H2A, H2B, H3 and H4 assembled in one H3-H4 heterotetramer and two H2A-H2B heterodimers. The octamer wraps approximately 147 bp of DNA. Monoubiquitination of Lys-121 by the BRE1 gives a specific tag for epigenetic transcriptional activation and is also prerequisite for histone H3 'Lys-4' and 'Lys-79' methylation. In terms of processing, phosphorylated on Ser-15 during apoptosis; which facilitates apoptotic chromatin condensation.

Its subcellular location is the nucleus. The protein localises to the chromosome. In terms of biological role, core component of nucleosome. Nucleosomes wrap and compact DNA into chromatin, limiting DNA accessibility to the cellular machineries which require DNA as a template. Histones thereby play a central role in transcription regulation, DNA repair, DNA replication and chromosomal stability. DNA accessibility is regulated via a complex set of post-translational modifications of histones, also called histone code, and nucleosome remodeling. Has broad-spectrum antibacterial activity. May be important in the antimicrobial defenses of chick reproductive system during follicle development in the ovary and egg formation in the oviduct. In Gallus gallus (Chicken), this protein is Histone H2B 1/2/3/4/6 (H2B-I).